Consider the following 973-residue polypeptide: UvrABC system protein A (973 aa).

34–41 (GLSGSGKS) serves as a coordination point for ATP. 2 consecutive ABC transporter domains span residues 331–609 (WAKS…PKSL) and 629–958 (PKKG…HFLK). An ATP-binding site is contributed by 662-669 (GVSGGGKS). The C4-type zinc finger occupies 761 to 787 (CEACQGDGVIKIEMHFLPDVYVTCDVC).

Belongs to the ABC transporter superfamily. UvrA family. As to quaternary structure, forms a heterotetramer with UvrB during the search for lesions.

Its subcellular location is the cytoplasm. The UvrABC repair system catalyzes the recognition and processing of DNA lesions. UvrA is an ATPase and a DNA-binding protein. A damage recognition complex composed of 2 UvrA and 2 UvrB subunits scans DNA for abnormalities. When the presence of a lesion has been verified by UvrB, the UvrA molecules dissociate. In Agrobacterium fabrum (strain C58 / ATCC 33970) (Agrobacterium tumefaciens (strain C58)), this protein is UvrABC system protein A.